The following is a 2037-amino-acid chain: Fatty acid synthase subunit beta (2037 aa).

The acetyltransferase stretch occupies residues 1 to 453 (MSTHRPFQLT…VYDTFDGSDF (453 aa)). Serine 261 serves as the catalytic For acetyltransferase activity. The interval 465–798 (VKLITELPVH…GSRVMTSKES (334 aa)) is enoyl reductase. The tract at residues 1132–1612 (GTELNWLQAF…LPNDTLQTTM (481 aa)) is dehydratase. The region spanning 1506 to 1634 (NGKTIEESVI…KVETRNVETE (129 aa)) is the MaoC-like domain. The segment at 1613-1833 (EHVGMINGRK…MTMQVAVPRD (221 aa)) is malonyl/palmitoyl transferase. The active-site For malonyltransferase activity is the serine 1796.

It belongs to the fungal fatty acid synthetase subunit beta family. In terms of assembly, [Alpha(6)beta(6)] hexamers of two multifunctional subunits (alpha and beta).

The catalysed reaction is acetyl-CoA + n malonyl-CoA + 2n NADPH + 4n H(+) = a long-chain-acyl-CoA + n CoA + n CO2 + 2n NADP(+).. It catalyses the reaction holo-[ACP] + acetyl-CoA = acetyl-[ACP] + CoA. It carries out the reaction holo-[ACP] + malonyl-CoA = malonyl-[ACP] + CoA. The enzyme catalyses a (3R)-hydroxyacyl-[ACP] = a (2E)-enoyl-[ACP] + H2O. The catalysed reaction is a 2,3-saturated acyl-[ACP] + NAD(+) = a (2E)-enoyl-[ACP] + NADH + H(+). It catalyses the reaction (9Z)-octadecenoyl-[ACP] + H2O = (9Z)-octadecenoate + holo-[ACP] + H(+). Functionally, fatty acid synthetase catalyzes the formation of long-chain fatty acids from acetyl-CoA, malonyl-CoA and NADPH. The beta subunit contains domains for: [acyl-carrier-protein] acetyltransferase and malonyltransferase, S-acyl fatty acid synthase thioesterase, enoyl-[acyl-carrier-protein] reductase, and 3-hydroxypalmitoyl-[acyl-carrier-protein] dehydratase. The sequence is that of Fatty acid synthase subunit beta (FAS1) from Candida albicans (Yeast).